Here is a 166-residue protein sequence, read N- to C-terminus: Phosphopantetheine adenylyltransferase (166 aa).

A substrate-binding site is contributed by serine 11. ATP is bound by residues 11–12 (SF) and histidine 19. Substrate-binding residues include lysine 43, leucine 75, and arginine 89. Residues 90–92 (GLR), glutamate 100, and 125–131 (YGYLSSS) each bind ATP.

The protein belongs to the bacterial CoaD family. As to quaternary structure, homohexamer. It depends on Mg(2+) as a cofactor.

Its subcellular location is the cytoplasm. It carries out the reaction (R)-4'-phosphopantetheine + ATP + H(+) = 3'-dephospho-CoA + diphosphate. It participates in cofactor biosynthesis; coenzyme A biosynthesis; CoA from (R)-pantothenate: step 4/5. Reversibly transfers an adenylyl group from ATP to 4'-phosphopantetheine, yielding dephospho-CoA (dPCoA) and pyrophosphate. The chain is Phosphopantetheine adenylyltransferase from Syntrophotalea carbinolica (strain DSM 2380 / NBRC 103641 / GraBd1) (Pelobacter carbinolicus).